Consider the following 418-residue polypeptide: Sialidase-3 (418 aa).

Positions 24-27 (YRIP) match the FRIP motif motif. Residues Arg25 and Arg45 each coordinate substrate. The active-site Proton acceptor is the Asp50. Residues 129–140 (LCSEDAGCSWGE) form a BNR 1 repeat. The substrate site is built by Tyr179 and Tyr181. The stretch at 203–214 (SDDFGVTWHHGK) is one BNR 2 repeat. Residues Glu223 and Arg243 each coordinate substrate. One copy of the BNR 3 repeat lies at 254-265 (STDSGGCFQKPT). Ser312 carries the phosphoserine modification. Arg339 is a binding site for substrate. Tyr369 (nucleophile) is an active-site residue. Glu386 is an active-site residue.

This sequence belongs to the glycosyl hydrolase 33 family. In terms of assembly, interacts with CAV1; this interaction enhances NEU3 sialidase activity within caveola. Interacts with EGFR; this interaction mediates desialylation of EGFR and enhances downstream signaling. Palmitoylated; may regulate intracellular trafficking and anchorage to plasma membrane and endomembranes. As to expression, expressed in heart, brain and cerebral cortex.

The protein resides in the cell membrane. The protein localises to the membrane. It is found in the caveola. Its subcellular location is the early endosome membrane. It localises to the recycling endosome membrane. The protein resides in the lysosome membrane. The enzyme catalyses Hydrolysis of alpha-(2-&gt;3)-, alpha-(2-&gt;6)-, alpha-(2-&gt;8)- glycosidic linkages of terminal sialic acid residues in oligosaccharides, glycoproteins, glycolipids, colominic acid and synthetic substrates.. The catalysed reaction is a ganglioside GD1a + H2O = a ganglioside GM1 + N-acetylneuraminate. It catalyses the reaction a ganglioside GD1a (d18:1(4E)) + H2O = a ganglioside GM1 (d18:1(4E)) + N-acetylneuraminate. It carries out the reaction a ganglioside GD1b + H2O = a ganglioside GM1 + N-acetylneuraminate. The enzyme catalyses a ganglioside GD1b (d18:1(4E)) + H2O = a ganglioside GM1 (d18:1(4E)) + N-acetylneuraminate. The catalysed reaction is a ganglioside GD3 + H2O = a ganglioside GM3 + N-acetylneuraminate. It catalyses the reaction a ganglioside GD3 (d18:1(4E)) + H2O = a ganglioside GM3 (d18:1(4E)) + N-acetylneuraminate. It carries out the reaction a ganglioside GM3 + H2O = a beta-D-galactosyl-(1-&gt;4)-beta-D-glucosyl-(1&lt;-&gt;1)-ceramide + N-acetylneuraminate. The enzyme catalyses a ganglioside GM1 + H2O = a ganglioside GA1 + N-acetylneuraminate. The catalysed reaction is a ganglioside GM1 (d18:1(4E)) + H2O = a ganglioside GA1 (d18:1(4E)) + N-acetylneuraminate. It catalyses the reaction a ganglioside GM2 (d18:1(4E)) + H2O = a ganglioside GA2 (d18:1(4E)) + N-acetylneuraminate. It carries out the reaction a ganglioside GM3 (d18:1(4E)) + H2O = a beta-D-Gal-(1-&gt;4)-beta-D-Glc-(1&lt;-&gt;1)-Cer(d18:1(4E)) + N-acetylneuraminate. The enzyme catalyses a ganglioside GT1b + H2O = a ganglioside GD1b + N-acetylneuraminate. Functionally, exo-alpha-sialidase that catalyzes the hydrolytic cleavage of the terminal sialic acid (N-acetylneuraminic acid, Neu5Ac) of a glycan moiety in the catabolism of glycolipids, glycoproteins and oligosacharides. Displays high catalytic efficiency for gangliosides including alpha-(2-&gt;3)-sialylated GD1a and GM3 and alpha-(2-&gt;8)-sialylated GD3. Plays a role in the regulation of transmembrane signaling through the modulation of ganglioside content of the lipid bilayer and by direct interaction with signaling receptors, such as EGFR. Desialylates EGFR and activates downstream signaling in proliferating cells. Contributes to clathrin-mediated endocytosis by regulating sorting of endocytosed receptors to early and recycling endosomes. The chain is Sialidase-3 (Neu3) from Mus musculus (Mouse).